The primary structure comprises 75 residues: UPF0235 protein Mflv_3569 (75 aa).

It belongs to the UPF0235 family.

This Mycolicibacterium gilvum (strain PYR-GCK) (Mycobacterium gilvum (strain PYR-GCK)) protein is UPF0235 protein Mflv_3569.